Consider the following 207-residue polypeptide: MASQAPRDFEAQALGLVPIVVETSGRGERSYDIYSRLLKERIVFMVGEVNDQTANLVVAQLLFLESENPDKDISLYINSPGGSVSAGMAIYDTMQFVKPDVSTLCMGLAASMGAFLLASGAKGKRYALPNARVMIHQPLGGARGQASDIEIQAREILYLRDRLNHLLAHHTGQDVERIARDTDRDNFMSSEDAKAYGLIDHVSTKRP.

Serine 111 functions as the Nucleophile in the catalytic mechanism. Histidine 136 is a catalytic residue.

It belongs to the peptidase S14 family. Fourteen ClpP subunits assemble into 2 heptameric rings which stack back to back to give a disk-like structure with a central cavity, resembling the structure of eukaryotic proteasomes.

Its subcellular location is the cytoplasm. It catalyses the reaction Hydrolysis of proteins to small peptides in the presence of ATP and magnesium. alpha-casein is the usual test substrate. In the absence of ATP, only oligopeptides shorter than five residues are hydrolyzed (such as succinyl-Leu-Tyr-|-NHMec, and Leu-Tyr-Leu-|-Tyr-Trp, in which cleavage of the -Tyr-|-Leu- and -Tyr-|-Trp bonds also occurs).. Its function is as follows. Cleaves peptides in various proteins in a process that requires ATP hydrolysis. Has a chymotrypsin-like activity. Plays a major role in the degradation of misfolded proteins. The chain is ATP-dependent Clp protease proteolytic subunit from Burkholderia mallei (strain ATCC 23344).